Consider the following 41-residue polypeptide: Plantazolicin (41 aa).

Positions 1 to 27 (MTQIKVPTALIASVHGEGQHLFEPMAA) are excised as a propeptide. Position 28 is an N2,N2-dimethylarginine (arginine 28). The segment at residues 28 to 29 (RC) is a cross-link (thiazole-4-carboxylic acid (Arg-Cys)). Cross-links (5-methyloxazole-4-carboxylic acid (Cys-Thr)) lie at residues 29 to 30 (CT) and 31 to 32 (CT). Residues 30-31 (TC) constitute a cross-link (thiazole-4-carboxylic acid (Thr-Cys)). A cross-link (5-methyloxazole-4-carboxylic acid (Thr-Thr)) is located at residues 32-33 (TT). Positions 35 to 36 (IS) form a cross-link, oxazole-4-carboxylic acid (Ile-Ser). 3 consecutive cross-links (oxazole-4-carboxylic acid (Ser-Ser)) follow at residues 36–37 (SS), 37–38 (SS), and 38–39 (SS). The 5-methyloxazoline-4-carboxylic acid (Ser-Thr) cross-link spans 39–40 (ST).

In terms of processing, maturation of thiazole and oxazole containing antibiotics involves the enzymatic condensation of a Cys, Ser or Thr with the alpha-carbonyl of the preceding amino acid to form a thioether or ether bond, then dehydration to form a double bond with the alpha-amino nitrogen. Thiazoline or oxazoline ring are dehydrogenated to form thiazole or oxazole rings. 2 forms exist: plantazolicin A and plantazolicin B. The structural difference between them is a dimethylation at Arg-28 in plantazolicin A.

The protein resides in the secreted. The protein localises to the cell wall. Its function is as follows. Peptide antibiotic inhibiting growth of Gram-positive bacteria in the dimethylated form plantazolicin A. The desmethyl form plantazolicin B has no antibiotic activity. The mode of action appears to be disruption of cell walls and lysis of cells. Inhibits B.subtilis strain HB0042, B.megaterium strain 7A1 and B.anthracis (MIC=2-4 ug/ml). Weakly inhibits Gram-positive bacteria B.brevis strain ATCC 8246, B.subtilis strain 168, B.cereus strain ATCC 14579 and strain CU1065, B.licheniformis strain ATCC 9789, M.luteus, B.sphaericus, P.granivorans and S.pyogenes (MIC=128 ug/ml). Does not inhibit B.pumilus, P.polymyxa, Arthrobacter sp., S.aureus, vancomycin-resistant E.faecalis, L.monocytogenes, methicillin-resistant S.aureus or Gram-negative bacteria E.coli strain K12, K.terrigena, Pseudomonas sp. and E.carotovora. This is Plantazolicin from Bacillus velezensis (strain DSM 23117 / BGSC 10A6 / LMG 26770 / FZB42) (Bacillus amyloliquefaciens subsp. plantarum).